The sequence spans 512 residues: MEISVASVTVSVAVVVVSWWVWRTLQRVWLKPKMLESYLRRQGLAGTPYTPLVGDLKRNFSMLAEARSKPINLTDDITPRIVPYPLQMLKTHGRTFFTWFGPIPTITIMDPEQIKEVFNKVYDFQKAHTFPLGRLIAAGLVSYDGDKWTKHRRIINPAFHLEKIKNMVPAFHQSCSEIVGEWDKLVTDKQSSCEVDIWPWLVSMTADVISRTAFGSSYKEGQRIFELQAELAQLIIQAFRKAIIPGYRYFPTKGNRRMKAAAREIKFILRGIVNKRLRAREAGEAPSDDLLGILLESNLGQTKGNGMSTEELMEECKLFYFAGQETTTVLLVWTMVLLSQHQDWQARAREEVKQVFGDKEPDAEGLNQLKVMTMILYEVLRLYPPVVQLTRAIHKEMQLGDLTLPGGVQISLPILLIQRDRELWGNDAGEFKPDRFKDGLSKATKNQVSFFPFAWGPRICIGQNFALLEAKMAMTLILRKFSFELSPSYVHAPYTVLTTHPQFGAPLILHKL.

A helical membrane pass occupies residues 2–22; that stretch reads EISVASVTVSVAVVVVSWWVW. Residue C460 participates in heme binding.

This sequence belongs to the cytochrome P450 family. The cofactor is heme.

Its subcellular location is the membrane. This Arabidopsis thaliana (Mouse-ear cress) protein is Cytochrome P450 72A13 (CYP72A13).